Reading from the N-terminus, the 434-residue chain is Zinc finger protein Pegasus (434 aa).

Residues 33-57 form a disordered region; that stretch reads VSSDKEAETLQGAGTDSDQNGLDHP. C2H2-type zinc fingers lie at residues 82 to 104, 110 to 132, and 138 to 161; these read LKCR…IRIH, HRCH…MRSH, and YKCE…RRKH. Polar residues predominate over residues 260 to 274; that stretch reads GQLSSLPPDTQNPAS. A disordered region spans residues 260-357; the sequence is GQLSSLPPDT…PSTPAPALPA (98 aa). A compositionally biased stretch (low complexity) spans 296–313; the sequence is CASAVSTSVAQSSSPASP. Polar residues predominate over residues 337–349; it reads RTSTPSISNSQPS. 2 C2H2-type zinc fingers span residues 364–386 and 392–419; these read HHCQ…MGCH and FQCN…CCQH.

Belongs to the Ikaros C2H2-type zinc-finger protein family. As to quaternary structure, probably self-associates.

Its subcellular location is the nucleus. Its function is as follows. Transcriptional repressor that binds the core 5'GNNTGTNG-3' DNA consensus sequence. This chain is Zinc finger protein Pegasus (ikzf5), found in Xenopus tropicalis (Western clawed frog).